Here is a 105-residue protein sequence, read N- to C-terminus: uncharacterized protein (105 aa).

A run of 2 helical transmembrane segments spans residues 26 to 46 and 66 to 86; these read NVLIASWLSFVVFLILGCIAI and SALAWTFFVLAILFGAATLAI.

The protein localises to the cell membrane. This is an uncharacterized protein from Mycoplasma pneumoniae (strain ATCC 29342 / M129 / Subtype 1) (Mycoplasmoides pneumoniae).